The primary structure comprises 450 residues: Crh-like protein 4 (450 aa).

The first 21 residues, 1-21 (MRLSLVGVAIGLLSSSAIVTA), serve as a signal peptide directing secretion. Cysteines 27 and 34 form a disulfide. In terms of domain architecture, GH16 spans 46–228 (YDFTKGSSPD…WAGGETDYSA (183 aa)). Glutamate 119 (nucleophile) is an active-site residue. Residue glutamate 123 is the Proton donor of the active site. Glutamate 123, lysine 201, tryptophan 205, and threonine 216 together coordinate chitin. A glycan (N-linked (GlcNAc...) asparagine) is linked at asparagine 383.

It belongs to the glycosyl hydrolase 16 family. CRH1 subfamily. In terms of processing, the GPI-like anchor contains a phosphoceramide lipid group. The anchor position has not been determined.

The protein resides in the cell membrane. It is found in the secreted. The protein localises to the cell wall. The enzyme catalyses Random endo-hydrolysis of N-acetyl-beta-D-glucosaminide (1-&gt;4)-beta-linkages in chitin and chitodextrins.. Its function is as follows. Dual chitinase/transglycosylase that plays a role in cell wall architecture. Chitinase and transglycosylase activities are coupled. Required for the polysaccharide cross-linking at the septa and the cell wall. More specifically, transfers chitin to 1,6-beta-glucan in the cell wall. The protein is Crh-like protein 4 of Aspergillus fumigatus (strain ATCC MYA-4609 / CBS 101355 / FGSC A1100 / Af293) (Neosartorya fumigata).